The primary structure comprises 473 residues: Photosystem II CP43 reaction center protein (473 aa).

Positions 1–14 are excised as a propeptide; that stretch reads MKTLYSLRRYFHVE. The residue at position 15 (Thr-15) is an N-acetylthreonine. Thr-15 is modified (phosphothreonine). Helical transmembrane passes span 69–93, 134–155, 178–200, 255–275, and 291–312; these read LFEVAHFVPEKPMYEQGLILLPHLA, LIGPETLEESYPFFGYLWKDKN, KAMYFGGVYDTWAPGGGDVRVIS, KPFAWARRAFVWSGEAYLSYS, and WFNNTVYPSEFFGPTGPEASQA. Glu-367 contacts [CaMn4O5] cluster. The helical transmembrane segment at 447–471 threads the bilayer; it reads RARAAAAGFEKGIDRDTEPVLSMRP.

Belongs to the PsbB/PsbC family. PsbC subfamily. As to quaternary structure, PSII is composed of 1 copy each of membrane proteins PsbA, PsbB, PsbC, PsbD, PsbE, PsbF, PsbH, PsbI, PsbJ, PsbK, PsbL, PsbM, PsbT, PsbX, PsbY, PsbZ, Psb30/Ycf12, at least 3 peripheral proteins of the oxygen-evolving complex and a large number of cofactors. It forms dimeric complexes. Binds multiple chlorophylls and provides some of the ligands for the Ca-4Mn-5O cluster of the oxygen-evolving complex. It may also provide a ligand for a Cl- that is required for oxygen evolution. PSII binds additional chlorophylls, carotenoids and specific lipids. serves as cofactor.

It localises to the plastid. The protein resides in the chloroplast thylakoid membrane. Its function is as follows. One of the components of the core complex of photosystem II (PSII). It binds chlorophyll and helps catalyze the primary light-induced photochemical processes of PSII. PSII is a light-driven water:plastoquinone oxidoreductase, using light energy to abstract electrons from H(2)O, generating O(2) and a proton gradient subsequently used for ATP formation. The sequence is that of Photosystem II CP43 reaction center protein from Ostreococcus tauri.